Reading from the N-terminus, the 212-residue chain is Major fimbrial subunit (212 aa).

The N-terminal stretch at 1–18 (MKKTLLGSLILLAFATNA) is a signal peptide. A disulfide bond links C42 and C82.

Belongs to the fimbrial protein family.

Its subcellular location is the fimbrium. In terms of biological role, mediates adherence to oropharyngeal epithelial cells. Helps the airway colonization process. The polypeptide is Major fimbrial subunit (hifA) (Haemophilus influenzae).